The primary structure comprises 299 residues: Oxygen-dependent coproporphyrinogen-III oxidase (299 aa).

Position 92 (Ser-92) interacts with substrate. The a divalent metal cation site is built by His-96 and His-106. His-106 serves as the catalytic Proton donor. 108-110 (NVR) lines the substrate pocket. Residues His-145 and His-175 each coordinate a divalent metal cation. Residues 240–275 (YVEFNLVWDRGTLFGLQTGGRTESILMSMPPLVRWE) are important for dimerization. 258–260 (GGR) contacts substrate.

It belongs to the aerobic coproporphyrinogen-III oxidase family. Homodimer. The cofactor is a divalent metal cation.

It is found in the cytoplasm. It catalyses the reaction coproporphyrinogen III + O2 + 2 H(+) = protoporphyrinogen IX + 2 CO2 + 2 H2O. It participates in porphyrin-containing compound metabolism; protoporphyrin-IX biosynthesis; protoporphyrinogen-IX from coproporphyrinogen-III (O2 route): step 1/1. Functionally, involved in the heme biosynthesis. Catalyzes the aerobic oxidative decarboxylation of propionate groups of rings A and B of coproporphyrinogen-III to yield the vinyl groups in protoporphyrinogen-IX. This Salmonella schwarzengrund (strain CVM19633) protein is Oxygen-dependent coproporphyrinogen-III oxidase.